The primary structure comprises 1406 residues: Receptor-type tyrosine-protein phosphatase eta (1406 aa).

Residues 1 to 24 (MRRLPLLPPCPLLLLLLLPAEVRC) form the signal peptide. The Extracellular portion of the chain corresponds to 25–1044 (TTACTDDCSL…LPQDPGVIAG (1020 aa)). Asn-36, Asn-52, Asn-97, Asn-103, Asn-118, Asn-124, Asn-186, Asn-192, Asn-243, Asn-275, Asn-281, Asn-296, Asn-302, Asn-331, Asn-332, Asn-364, Asn-385, Asn-391, Asn-453, Asn-459, Asn-484, Asn-500, Asn-510, Asn-547, Asn-568, Asn-630, Asn-636, Asn-651, Asn-657, Asn-719, Asn-745, Asn-750, Asn-766, Asn-776, Asn-804, and Asn-828 each carry an N-linked (GlcNAc...) asparagine glycan. Residues 39 to 72 (EEMGTSSNDELSVNATSGNRRLSEDVSLPGRAMS) are disordered. Residues 41–58 (MGTSSNDELSVNATSGNR) are compositionally biased toward polar residues. Fibronectin type-III domains follow at residues 82-170 (AVLD…TKPS), 171-259 (PVLD…TKPS), 260-343 (PVLD…SLNL), 346-437 (KPSP…TKPS), 438-523 (PVLD…SLYT), 524-614 (KPTP…TKPR), 615-703 (AVLH…TKPS), 704-793 (MVLN…VPSS), 794-888 (VNAF…TDPP), and 887-979 (PPVP…IVDV). Asn-1010 is a glycosylation site (N-linked (GlcNAc...) asparagine). A helical membrane pass occupies residues 1045-1065 (AVIGCLLAILAVVAIGGYIFW). The Cytoplasmic segment spans residues 1066-1406 (RRRRKDKRNT…AFGKANGYHA (341 aa)). One can recognise a Tyrosine-protein phosphatase domain in the interval 1110-1367 (FAEEYEELKS…VFLNQCVMDI (258 aa)). Residues Asp-1274, 1308–1314 (CSAGVGR), and Gln-1352 each bind substrate. The Phosphocysteine intermediate role is filled by Cys-1308.

The protein belongs to the protein-tyrosine phosphatase family. Receptor class 3 subfamily. In terms of tissue distribution, found on the apical surfaces of retinal Mueller cells, renal tubule cells and intestinal brush border cells.

The protein resides in the cell membrane. The protein localises to the cell projection. It localises to the ruffle membrane. It is found in the cell junction. It catalyses the reaction O-phospho-L-tyrosyl-[protein] + H2O = L-tyrosyl-[protein] + phosphate. Its function is as follows. Tyrosine phosphatase which dephosphorylates or contributes to the dephosphorylation of several substrates. Plays a role in cell adhesion, migration, proliferation and differentiation. Has a role in megakaryocytes and platelet formation. May influence the potential of nonsensory supporting cells to either proliferate or differentiate into hair cells. This chain is Receptor-type tyrosine-protein phosphatase eta (PTPRJ), found in Gallus gallus (Chicken).